The primary structure comprises 140 residues: ATP synthase epsilon chain (140 aa).

The protein belongs to the ATPase epsilon chain family. In terms of assembly, F-type ATPases have 2 components, CF(1) - the catalytic core - and CF(0) - the membrane proton channel. CF(1) has five subunits: alpha(3), beta(3), gamma(1), delta(1), epsilon(1). CF(0) has three main subunits: a, b and c.

The protein resides in the cell inner membrane. Functionally, produces ATP from ADP in the presence of a proton gradient across the membrane. This Bordetella bronchiseptica (strain ATCC BAA-588 / NCTC 13252 / RB50) (Alcaligenes bronchisepticus) protein is ATP synthase epsilon chain.